The following is a 143-amino-acid chain: NADH-quinone oxidoreductase subunit A (143 aa).

3 helical membrane-spanning segments follow: residues 7–27 (GFGN…GGYL), 63–83 (FYVV…LYPW), and 93–113 (FALF…AYAW).

The protein belongs to the complex I subunit 3 family. NDH-1 is composed of 14 different subunits. Subunits NuoA, H, J, K, L, M, N constitute the membrane sector of the complex.

The protein localises to the cell inner membrane. The catalysed reaction is a quinone + NADH + 5 H(+)(in) = a quinol + NAD(+) + 4 H(+)(out). Its function is as follows. NDH-1 shuttles electrons from NADH, via FMN and iron-sulfur (Fe-S) centers, to quinones in the respiratory chain. The immediate electron acceptor for the enzyme in this species is believed to be a menaquinone. Couples the redox reaction to proton translocation (for every two electrons transferred, four hydrogen ions are translocated across the cytoplasmic membrane), and thus conserves the redox energy in a proton gradient. In Chlorobium limicola (strain DSM 245 / NBRC 103803 / 6330), this protein is NADH-quinone oxidoreductase subunit A.